Reading from the N-terminus, the 836-residue chain is General negative regulator of transcription subunit 3 (836 aa).

Coiled-coil stretches lie at residues 36-68, 119-195, and 255-292; these read NNPS…WQSS, RERR…ANEE, and NTSD…AKNA. Residues 252–267 show a composition bias toward polar residues; that stretch reads EDNNTSDANESLQDIS. Disordered stretches follow at residues 252–284, 296–391, 410–471, and 513–532; these read EDNN…AKKA, AIPV…LKPA, AVEK…NTGA, and NPKS…PENT. Positions 268-283 are enriched in basic and acidic residues; it reads KLSKKEQRKLEREAKK. 3 positions are modified to phosphoserine: Ser303, Ser307, and Ser322. A compositionally biased stretch (polar residues) spans 341 to 386; sequence SIKSPRSSADNLLPSLQKSPSSATPETPTNVHTHIHQTPNGITGAT. The segment covering 418–446 has biased composition (low complexity); it reads TSASSTISNTSTKTPTTAAATTTSSNANS. Phosphoserine occurs at positions 446 and 450. Polar residues-rich tracts occupy residues 447-468 and 522-531; these read RIGS…QPDN and TTVNQNGPEN. A Glycyl lysine isopeptide (Lys-Gly) (interchain with G-Cter in ubiquitin) cross-link involves residue Lys535. The interval 537 to 583 is disordered; the sequence is MEQKEEESPEERNKLQVPTFGVFDDDFESDRDSETEPEEEEQPSTPK. A compositionally biased stretch (acidic residues) spans 559–578; that stretch reads FDDDFESDRDSETEPEEEEQ. Phosphoserine occurs at positions 565 and 569. Thr571 is subject to Phosphothreonine. Ser657 carries the phosphoserine modification. Positions 803–831 form a coiled coil; it reads NVNDQSNVTLEQQKQEISHGKQLLKQLKQ.

It belongs to the CNOT2/3/5 family. In terms of assembly, forms a NOT protein complex that comprises NOT1, NOT2, NOT3, NOT4 and NOT5. Subunit of the 1.0 MDa CCR4-NOT core complex that contains CCR4, CAF1, NOT1, NOT2, NOT3, NOT4, NOT5, CAF40 and CAF130. The core complex probably is part of a less characterized 1.9 MDa CCR4-NOT complex.

Its subcellular location is the cytoplasm. It localises to the nucleus. In terms of biological role, acts as a component of the CCR4-NOT core complex, which in the nucleus seems to be a general transcription factor, and in the cytoplasm the major mRNA deadenylase involved in mRNA turnover. The NOT protein subcomplex negatively regulates the basal and activated transcription of many genes. Preferentially affects TC-type TATA element-dependent transcription. Could directly or indirectly inhibit component(s) of the general transcription machinery. This is General negative regulator of transcription subunit 3 (NOT3) from Saccharomyces cerevisiae (strain ATCC 204508 / S288c) (Baker's yeast).